We begin with the raw amino-acid sequence, 352 residues long: Schlafen-like protein 4 (352 aa).

Residues 87-235 form an SLFN-like fold region; sequence FEYQSNFSEV…SDKVYQISSG (149 aa). A helical transmembrane segment spans residues 326–343; the sequence is IQNIGWIFFGTALSCCIY.

Belongs to the Schlafen family. Component of the PUCH (precursor of 21U RNA 5'-end cleavage holoenzyme) complex; consisting of tofu-1, tofu-2 and either slfl-3 or slfl-4.

Its subcellular location is the membrane. In terms of biological role, component of the trimeric PUCH (precursor of 21U RNA 5'-end cleavage holoenzyme) complex, that acts as an endoribonuclease processing the 5'-end of precursor Piwi-interacting RNAs (piRNAs). The PUCH complex consists of tofu-1, tofu-2 and either slfl-3 or slfl-4, where tofu-2 exhibits endoribonuclease activity. PUCH-mediated processing strictly requires a 7-methyl-G cap (m7 G-cap) and an uracil at position three (U3). PUCH also exhibits a strict bias for piRNA precursors with an A or G at position 1. Mature piRNA production is enhanced by the interaction of PUCH with the PETISCO complex, which is stabilizing piRNA precursors and allows their processing by PUCH. The sequence is that of Schlafen-like protein 4 from Caenorhabditis elegans.